Consider the following 413-residue polypeptide: E3 ubiquitin ligase ICP22 (413 aa).

Residues Met1–Ile124 are disordered. Basic and acidic residues predominate over residues Gly62 to Gly76. The segment covering Ser84–Gly97 has biased composition (low complexity). Tyr189 is subject to Phosphotyrosine; by host. Disordered stretches follow at residues Leu289 to Gly334 and Ala370 to Glu390. A compositionally biased stretch (acidic residues) spans Ser297–Asp309.

This sequence belongs to the herpesviridae ICP22 family. Tyrosine phosphorylated.

The protein localises to the host nucleus. It participates in protein modification; protein ubiquitination. In terms of biological role, functions as an E3 ubiquitin ligase and plays a role in the inhibition of innate immunity by preventing IFN-mediated signaling. Induces the ubiquitination and degradation of host STAT1, STAT2 and IRF9, resulting in the blockade of ISGF3 nuclear translocation. In Human herpesvirus 2 (strain HG52) (HHV-2), this protein is E3 ubiquitin ligase ICP22.